We begin with the raw amino-acid sequence, 276 residues long: Lectin-like protein At3g16530 (276 aa).

An N-terminal signal peptide occupies residues 1 to 19 (MQIHKLCFLVLFLANAAFA). The legume-lectin like stretch occupies residues 20–270 (VKFNFDSFDG…RHDIWSWSFE (251 aa)). N-linked (GlcNAc...) asparagine glycans are attached at residues Asn79, Asn129, and Asn196.

This sequence belongs to the leguminous lectin family.

It localises to the secreted. The protein resides in the extracellular space. It is found in the apoplast. The chain is Lectin-like protein At3g16530 from Arabidopsis thaliana (Mouse-ear cress).